We begin with the raw amino-acid sequence, 710 residues long: Probable threonine--tRNA ligase 1, cytoplasmic (710 aa).

The disordered stretch occupies residues 1-35 (MSDSQENKPVETPTEVKPVAEKKPAAEKKEKKPAV). The span at 18–33 (PVAEKKPAAEKKEKKP) shows a compositional bias: basic and acidic residues. The TGS domain occupies 72-137 (KEEPINVTLP…EADCNLQLCK (66 aa)).

This sequence belongs to the class-II aminoacyl-tRNA synthetase family.

The protein resides in the cytoplasm. It catalyses the reaction tRNA(Thr) + L-threonine + ATP = L-threonyl-tRNA(Thr) + AMP + diphosphate + H(+). The chain is Probable threonine--tRNA ligase 1, cytoplasmic (thrS1) from Dictyostelium discoideum (Social amoeba).